A 225-amino-acid polypeptide reads, in one-letter code: NAD(P)H-quinone oxidoreductase subunit K, chloroplastic (225 aa).

4 residues coordinate [4Fe-4S] cluster: Cys-43, Cys-44, Cys-108, and Cys-139.

The protein belongs to the complex I 20 kDa subunit family. In terms of assembly, NDH is composed of at least 16 different subunits, 5 of which are encoded in the nucleus. It depends on [4Fe-4S] cluster as a cofactor.

Its subcellular location is the plastid. It is found in the chloroplast thylakoid membrane. The catalysed reaction is a plastoquinone + NADH + (n+1) H(+)(in) = a plastoquinol + NAD(+) + n H(+)(out). It catalyses the reaction a plastoquinone + NADPH + (n+1) H(+)(in) = a plastoquinol + NADP(+) + n H(+)(out). In terms of biological role, NDH shuttles electrons from NAD(P)H:plastoquinone, via FMN and iron-sulfur (Fe-S) centers, to quinones in the photosynthetic chain and possibly in a chloroplast respiratory chain. The immediate electron acceptor for the enzyme in this species is believed to be plastoquinone. Couples the redox reaction to proton translocation, and thus conserves the redox energy in a proton gradient. This is NAD(P)H-quinone oxidoreductase subunit K, chloroplastic from Agrostis stolonifera (Creeping bentgrass).